The primary structure comprises 460 residues: Probable amino acid transporter skat-1 (460 aa).

10 helical membrane passes run 64-84, 132-152, 172-192, 194-214, 236-256, 270-290, 316-336, 362-382, 383-403, and 426-446; these read LGGL…NWYG, FVNV…ILFI, MILM…FTEM, IVSF…AVIM, TITM…ILPI, FGVL…LGFF, VNVF…YVVY, GFRV…PKLE, IMIP…FPPF, and IFIN…GVYT.

This sequence belongs to the amino acid/polyamine transporter 2 family. In terms of tissue distribution, expressed in the head, tail, body and ventral nerve cord neurons, muscles of the vulva, and intestine.

It is found in the membrane. The protein resides in the cytoplasmic granule. In terms of biological role, plays a role in the accumulation of vital dyes and endogenous fluorescent compounds in lysosome related organelles. Has an effect on lysosome related organelle (LRO) function, in a pathway with serotonin. This chain is Probable amino acid transporter skat-1, found in Caenorhabditis elegans.